A 469-amino-acid chain; its full sequence is MNDFGIKNMDQVAPVANSYRGTLKRQPAFDTFDGSLFAVFPSLNEEQTLQEVPTGLDSISHDSANCELPLLTPCSKAVMSQALKATFSGFKKEQRRLGIPKNPWLWSEQQVCQWLLWATNEFSLVNVNLQRFGMNGQMLCNLGKERFLELAPDFVGDILWEHLEQMIKENQEKTEDQYEENSHLTSVPHWINSNTLGFGTEQAPYGMQTQNYPKGGLLDSMCPASTPSVLSSEQEFQMFPKSRLSSVSVTYCSVSQDFPGSNLNLLTNNSGTPKDHDSPENGADSFESSDSLLQSWNSQSSLLDVQRVPSFESFEDDCSQSLCLNKPTMSFKDYIQERSDPVEQGKPVIPAAVLAGFTGSGPIQLWQFLLELLSDKSCQSFISWTGDGWEFKLADPDEVARRWGKRKNKPKMNYEKLSRGLRYYYDKNIIHKTSGKRYVYRFVCDLQNLLGFTPEELHAILGVQPDTED.

Positions 85–170 (ATFSGFKKEQ…EHLEQMIKEN (86 aa)) constitute a PNT domain. Phosphoserine is present on residues Ser-220 and Ser-225. Residues 264 to 289 (NLLTNNSGTPKDHDSPENGADSFESS) form a disordered region. Ser-295, Ser-298, and Ser-301 each carry phosphoserine. Residues 363–443 (IQLWQFLLEL…SGKRYVYRFV (81 aa)) constitute a DNA-binding region (ETS).

The protein belongs to the ETS family. In terms of processing, phosphorylation by CDK10 at Ser-220 and Ser-225 creates a phosphodegron that targets ETS2 for proteasomal degradation.

It localises to the nucleus. Transcription factor activating transcription. Binds specifically the DNA GGAA/T core motif (Ets-binding site or EBS) in gene promoters and stimulates transcription. The polypeptide is Protein C-ets-2 (ETS2) (Homo sapiens (Human)).